A 172-amino-acid polypeptide reads, in one-letter code: MEYTGSQYIGEFVDGRMEGDAEYILPTETKYIGEMKDGMFHGQGTLYFPNGSRFDAVWEKGLVVKGTYTFSDGLQYDTENWHYCDSYDRRFYTEICYGLKPAGISQLTNMDPPRKIPPGCYDCGDGFYNPNTRIVKDYNYRFLRNADDDEHEWIVRTCRKGWDETMGPEPKS.

3 MORN repeats span residues 8 to 30, 31 to 53, and 54 to 75; these read YIGE…TETK, YIGE…NGSR, and FDAV…DGLQ.

It localises to the cell projection. The protein localises to the cilium. Its subcellular location is the flagellum. In Bos taurus (Bovine), this protein is MORN repeat-containing protein 5 (MORN5).